The primary structure comprises 173 residues: Glucagon family neuropeptides (173 aa).

An N-terminal signal peptide occupies residues 1–22; sequence MSSKATLALLIYGIIMHYSVYS. The propeptide occupies 23–80; sequence SPLGLNYPNLRLENEVYDEDGNSLPALAFDSDQIAIRSPPSVADDLYTLYYPPEKGTE. Lys-166 bears the Lysine amide mark. Residues 170-173 constitute a propeptide that is removed on maturation; the sequence is LGYL.

Belongs to the glucagon family.

The protein localises to the secreted. Primary role of GHRH is to release GH from the pituitary. In terms of biological role, PACAP plays pivotal roles as a neurotransmitter and/or a neuromodulator. The protein is Glucagon family neuropeptides of Oncorhynchus nerka (Sockeye salmon).